The following is a 509-amino-acid chain: Ribonuclease Y (509 aa).

Residues 5–25 (IAGVSGIAGAAVGAGACYLWL) form a helical membrane-spanning segment. One can recognise a KH domain in the interval 199-265 (LINLVNLPSD…TRVIEILIED (67 aa)). The HD domain occupies 325-418 (ALAHTLEVAK…VCAADTLSAA (94 aa)).

Belongs to the RNase Y family.

Its subcellular location is the cell membrane. In terms of biological role, endoribonuclease that initiates mRNA decay. The protein is Ribonuclease Y of Sulfurovum sp. (strain NBC37-1).